Here is a 242-residue protein sequence, read N- to C-terminus: uncharacterized protein (242 aa).

Residues 2–62 (EKAYKILSVQ…VEKPSVIFED (61 aa)) enclose the S4 RNA-binding domain. Aspartate 93 is an active-site residue.

This sequence belongs to the pseudouridine synthase RluA family.

The catalysed reaction is a uridine in RNA = a pseudouridine in RNA. This is an uncharacterized protein from Helicobacter pylori (strain ATCC 700392 / 26695) (Campylobacter pylori).